We begin with the raw amino-acid sequence, 1026 residues long: Maternal effect protein staufen (1026 aa).

Over residues 16–29 the composition is skewed to basic residues; it reads AAHHHSHSHAHMHL. Disordered regions lie at residues 16-159, 190-210, and 234-311; these read AAHH…QLPP, NHYG…SNYA, and TPVP…KDKT. The segment covering 70–111 has biased composition (low complexity); the sequence is AQQQQQQQTSSNQAGAVAAAGAAYHHGNINSNSGSNISSNSN. Polar residues predominate over residues 112-126; the sequence is QMQKIRQQHQHLSSS. 2 stretches are compositionally biased toward low complexity: residues 192–210 and 234–256; these read YGSN…SNYA and TPVP…NSTV. Positions 267–284 are enriched in basic and acidic residues; sequence TSQKPETRQEPASADDHV. Residues 285–303 show a composition bias toward polar residues; it reads STGNIDATGALSNEDTSSS. 2 DRBM domains span residues 311-378 and 490-557; these read TPMC…ETMY and PKFP…VLKT. Phosphoserine occurs at positions 563 and 570. A DRBM 3 domain is found at 578–645; sequence SPISQVHEIG…AEKMLVELQK (68 aa). RNA contacts are provided by histidine 606, lysine 608, lysine 628, lysine 629, and lysine 632. The interval 647–707 is disordered; that stretch reads PPLTPTKQTP…PPKDKLIDMD (61 aa). Phosphothreonine is present on residues threonine 650 and threonine 655. Serine 676 is modified (phosphoserine). Over residues 678–688 the composition is skewed to polar residues; the sequence is VSGTDGPTQTG. The DRBM 4 domain maps to 711 to 781; it reads NPITKLIQLQ…AQALFELLEA (71 aa). A disordered region spans residues 855–948; that stretch reads ESKEEEANKE…SNSTSNTQSA (94 aa). Positions 864–890 are enriched in low complexity; the sequence is EVAVAAEENSNNSANSGDSSNSSSGDS. Residues 891–901 are compositionally biased toward polar residues; sequence QATEAASESAL. Low complexity-rich tracts occupy residues 902–920 and 934–947; these read NTST…SNVG and NTES…NTQS. Positions 951–1018 constitute a DRBM 5 domain; it reads HMKEQLLYLS…ASNALKILSK (68 aa).

As to quaternary structure, component of neuronal ribonucleoprotein complexes (RNPs) that contains at least various translational repressor and mRNA turnover proteins such as me31B, tral, Upf1, AGO2 and sometimes Fmr1. As to expression, polar granules at the posterior pole of the oocyte, and by the time the egg is laid, at the anterior pole.

The protein resides in the cytoplasm. The protein localises to the cytoplasmic ribonucleoprotein granule. In terms of biological role, RNA-binding protein which forms ribonucleoprotein complexes (RNPs) that play critical roles in the localization, translational repression and turnover of RNAs during embryogenesis, neurotransmission and neurogenesis. In the oocyte, essential for the localization of both the osk/oskar mRNA to the posterior pole and bcd/bicoid RNA to the anterior pole, and is therefore required for the correct anterior-posterior patterning of the developing embryo. Association with osk or bcd at their respective poles, appears to promote the formation and stabilization of the ribonucleoprotein complexes. Integral component of diverse neuritic ribonucleoprotein complexes (RNPs) that mediate the transport, translation and turnover of neuronal RNAs during neuorgenesis and the translation repression of synaptic transcripts in preparation for their dendritic targeting. The sequence is that of Maternal effect protein staufen (stau) from Drosophila melanogaster (Fruit fly).